Consider the following 267-residue polypeptide: Tryptophan synthase alpha chain (267 aa).

Residues Glu47 and Asp58 each act as proton acceptor in the active site.

The protein belongs to the TrpA family. As to quaternary structure, tetramer of two alpha and two beta chains.

The catalysed reaction is (1S,2R)-1-C-(indol-3-yl)glycerol 3-phosphate + L-serine = D-glyceraldehyde 3-phosphate + L-tryptophan + H2O. It functions in the pathway amino-acid biosynthesis; L-tryptophan biosynthesis; L-tryptophan from chorismate: step 5/5. Its function is as follows. The alpha subunit is responsible for the aldol cleavage of indoleglycerol phosphate to indole and glyceraldehyde 3-phosphate. In Chlorobium chlorochromatii (strain CaD3), this protein is Tryptophan synthase alpha chain.